A 149-amino-acid polypeptide reads, in one-letter code: MRAVVQRVKEAFVIVDGKEVGRIQRGLCLLVGVAQDDTEEDADYLCEKVANLRIFEDETSKFNLSLMDVGGEVLVISNFTVMGDARKGRRPNFMFAAEKEKAERLYNYFVEKLKQKVRKVECGVFQAHMEVSILNDGPVTVLLDSKKIF.

Positions 137-138 (GP) match the Gly-cisPro motif, important for rejection of L-amino acids motif.

It belongs to the DTD family. As to quaternary structure, homodimer.

The protein resides in the cytoplasm. The catalysed reaction is glycyl-tRNA(Ala) + H2O = tRNA(Ala) + glycine + H(+). The enzyme catalyses a D-aminoacyl-tRNA + H2O = a tRNA + a D-alpha-amino acid + H(+). Functionally, an aminoacyl-tRNA editing enzyme that deacylates mischarged D-aminoacyl-tRNAs. Also deacylates mischarged glycyl-tRNA(Ala), protecting cells against glycine mischarging by AlaRS. Acts via tRNA-based rather than protein-based catalysis; rejects L-amino acids rather than detecting D-amino acids in the active site. By recycling D-aminoacyl-tRNA to D-amino acids and free tRNA molecules, this enzyme counteracts the toxicity associated with the formation of D-aminoacyl-tRNA entities in vivo and helps enforce protein L-homochirality. This chain is D-aminoacyl-tRNA deacylase, found in Caldicellulosiruptor bescii (strain ATCC BAA-1888 / DSM 6725 / KCTC 15123 / Z-1320) (Anaerocellum thermophilum).